The following is a 674-amino-acid chain: Ribonuclease E (674 aa).

Residues 35 to 117 (GDIYLGLVDN…LTGNISMPGR (83 aa)) enclose the S1 motif domain. Residues Asp-296 and Asp-339 each contribute to the Mg(2+) site. Zn(2+) is bound by residues Cys-397 and Cys-400. 2 disordered regions span residues 458 to 529 (PLDL…RRVE) and 626 to 674 (QPRE…SSAE). Composition is skewed to basic and acidic residues over residues 484 to 493 (GSEFSEKENI) and 509 to 529 (TKEKVTGTAPPRRERPSRRVE). The span at 663–674 (RPGRRRRRSSAE) shows a compositional bias: basic residues. A C4 Arg-rich motif, probably responsible for interaction with PNPase motif is present at residues 665–673 (GRRRRRSSA).

It belongs to the RNase E/G family. Fractionates in a 250-300 kDa region, which is too small to be the equivalent of an RNA degradosome, as occurs with E.coli RNase E. Interacts with polynucleotide phosphorylase (PNPase, pnp), probably via the C4 Arg-rich motif (residues 665-673). Mg(2+) serves as cofactor.

The protein localises to the cytoplasm. The protein resides in the cell inner membrane. The catalysed reaction is Endonucleolytic cleavage of single-stranded RNA in A- and U-rich regions.. Functionally, endoribonuclease that plays a central role in rRNA processing and mRNA decay, and probably tRNA processing. Acts on 9S rRNA (the precursor of 5S rRNA) and RNAI, a molecule that controls the replication of ColE1 plasmid. Upon expression in E.coli does not purify with endogenous degradosome proteins. Prefers 5'-monophosphorylated substrates over 5'-triphosphorylated substrates. Complements an rne temperature-sensitive mutation in E.coli, despite being considerably shorter and not able to interact with the E.coli degradosome. Cleaves AU-rich sequences in vitro, tested with psbA2 mRNA. Complements both an rne temperature-sensitive mutation and an rng deletion in E.coli. Acts in the degradation of psaL mRNA in the presence but not the absence of the sRNA PsrR1. Cleaves the rimO-crhR transcript, contributing to the very short half-life of rimO mRNA. Its function is as follows. mRNA for psbA2, one of the core proteins in photosystem II, is degraded in the dark under control of a cis-acting AU-rich box in its 5'-UTR. RNase E cuts in this box, suggesting it is involved in this dark-induced mRNA instability. CRISPR (clustered regularly interspaced short palindromic repeat) is an adaptive immune system that provides protection against mobile genetic elements (viruses, transposable elements and conjugative plasmids). CRISPR clusters contain spacers, sequences complementary to antecedent mobile elements, and target invading nucleic acids. CRISPR clusters are transcribed and processed into CRISPR RNA (crRNA). Endogenous RNase E is required for correct processing of pre-crRNA for the CRISPR3 subtype III-B system in this genome (genes sll7080 to sll7095). This CRISPR3 system does not include a cas6 gene, which is the usual RNase involved in crRNA maturation. This chain is Ribonuclease E, found in Synechocystis sp. (strain ATCC 27184 / PCC 6803 / Kazusa).